Consider the following 94-residue polypeptide: Large ribosomal subunit protein uL29 (94 aa).

The disordered stretch occupies residues 65–94; it reads ANPGERKSRVFSRAKRKKKNLARLSAKAKG. The span at 73–94 shows a compositional bias: basic residues; the sequence is RVFSRAKRKKKNLARLSAKAKG.

It belongs to the universal ribosomal protein uL29 family.

The protein is Large ribosomal subunit protein uL29 of Leptospira interrogans serogroup Icterohaemorrhagiae serovar copenhageni (strain Fiocruz L1-130).